We begin with the raw amino-acid sequence, 585 residues long: Arginine--tRNA ligase (585 aa).

The short motif at 131–141 is the 'HIGH' region element; the sequence is ANPTGPMHVGH.

This sequence belongs to the class-I aminoacyl-tRNA synthetase family. As to quaternary structure, monomer.

The protein resides in the cytoplasm. The catalysed reaction is tRNA(Arg) + L-arginine + ATP = L-arginyl-tRNA(Arg) + AMP + diphosphate. In Chelativorans sp. (strain BNC1), this protein is Arginine--tRNA ligase.